Here is a 386-residue protein sequence, read N- to C-terminus: NADH-ubiquinone oxidoreductase 49 kDa subunit homolog (386 aa).

Belongs to the complex I 49 kDa subunit family.

The protein localises to the mitochondrion. It carries out the reaction a ubiquinone + NADH + 5 H(+)(in) = a ubiquinol + NAD(+) + 4 H(+)(out). Its function is as follows. Core subunit of the mitochondrial membrane respiratory chain NADH dehydrogenase (Complex I) that is believed to belong to the minimal assembly required for catalysis. Complex I functions in the transfer of electrons from NADH to the respiratory chain. The immediate electron acceptor for the enzyme is believed to be ubiquinone. Component of the iron-sulfur (IP) fragment of the enzyme. Component of the iron-sulfur (IP) fragment of the enzyme. The polypeptide is NADH-ubiquinone oxidoreductase 49 kDa subunit homolog (NAD7) (Trypanosoma brucei brucei).